The primary structure comprises 94 residues: PqqA binding protein (94 aa).

This sequence belongs to the PqqD family. As to quaternary structure, monomer. Interacts with PqqE.

Its pathway is cofactor biosynthesis; pyrroloquinoline quinone biosynthesis. In terms of biological role, functions as a PqqA binding protein and presents PqqA to PqqE, in the pyrroloquinoline quinone (PQQ) biosynthetic pathway. The polypeptide is PqqA binding protein (Pseudomonas syringae pv. syringae (strain B728a)).